Consider the following 405-residue polypeptide: UDP-N-acetylglucosamine--N-acetylmuramyl-(pentapeptide) pyrophosphoryl-undecaprenol N-acetylglucosamine transferase (405 aa).

Residues 11–13, N127, R168, S191, I248, and Q293 each bind UDP-N-acetyl-alpha-D-glucosamine; that span reads TGG.

The protein belongs to the glycosyltransferase 28 family. MurG subfamily.

The protein resides in the cell inner membrane. The catalysed reaction is di-trans,octa-cis-undecaprenyl diphospho-N-acetyl-alpha-D-muramoyl-L-alanyl-D-glutamyl-meso-2,6-diaminopimeloyl-D-alanyl-D-alanine + UDP-N-acetyl-alpha-D-glucosamine = di-trans,octa-cis-undecaprenyl diphospho-[N-acetyl-alpha-D-glucosaminyl-(1-&gt;4)]-N-acetyl-alpha-D-muramoyl-L-alanyl-D-glutamyl-meso-2,6-diaminopimeloyl-D-alanyl-D-alanine + UDP + H(+). Its pathway is cell wall biogenesis; peptidoglycan biosynthesis. Its function is as follows. Cell wall formation. Catalyzes the transfer of a GlcNAc subunit on undecaprenyl-pyrophosphoryl-MurNAc-pentapeptide (lipid intermediate I) to form undecaprenyl-pyrophosphoryl-MurNAc-(pentapeptide)GlcNAc (lipid intermediate II). This chain is UDP-N-acetylglucosamine--N-acetylmuramyl-(pentapeptide) pyrophosphoryl-undecaprenol N-acetylglucosamine transferase, found in Sorangium cellulosum (strain So ce56) (Polyangium cellulosum (strain So ce56)).